The primary structure comprises 67 residues: ATP synthase protein 8 (67 aa).

Residues 8 to 24 (TWFITILATILTLFIIM) traverse the membrane as a helical segment. Residue Lys-54 is modified to N6-acetyllysine; alternate. Residue Lys-54 is modified to N6-succinyllysine; alternate. Position 57 is an N6-acetyllysine (Lys-57).

It belongs to the ATPase protein 8 family. In terms of assembly, F-type ATPases have 2 components, CF(1) - the catalytic core - and CF(0) - the membrane proton channel. Component of an ATP synthase complex composed of ATP5PB, ATP5MC1, ATP5F1E, ATP5PD, ATP5ME, ATP5PF, ATP5MF, MT-ATP6, MT-ATP8, ATP5F1A, ATP5F1B, ATP5F1D, ATP5F1C, ATP5PO, ATP5MG, ATP5MK and ATP5MJ. Interacts with PRICKLE3.

The protein resides in the mitochondrion membrane. Functionally, mitochondrial membrane ATP synthase (F(1)F(0) ATP synthase or Complex V) produces ATP from ADP in the presence of a proton gradient across the membrane which is generated by electron transport complexes of the respiratory chain. F-type ATPases consist of two structural domains, F(1) - containing the extramembraneous catalytic core and F(0) - containing the membrane proton channel, linked together by a central stalk and a peripheral stalk. During catalysis, ATP synthesis in the catalytic domain of F(1) is coupled via a rotary mechanism of the central stalk subunits to proton translocation. Part of the complex F(0) domain. Minor subunit located with subunit a in the membrane. The chain is ATP synthase protein 8 (MT-ATP8) from Artibeus jamaicensis (Jamaican fruit-eating bat).